A 91-amino-acid chain; its full sequence is Alpha-defensin-related sequence 2 (91 aa).

The signal sequence occupies residues 1 to 19 (MKKLVLLFALVLLAFQVQA). A propeptide spanning residues 20–58 (DSIQNTDEETKTEEQPGEKDQAVSVSFGDPQGSALQDAA) is cleaved from the precursor. The disordered stretch occupies residues 22-48 (IQNTDEETKTEEQPGEKDQAVSVSFGD). Basic and acidic residues predominate over residues 27–40 (EETKTEEQPGEKDQ). 7 repeat units span residues 65–67 (CPQ), 68–70 (CPR), 71–73 (CPS), 74–76 (CPS), 77–79 (CPR), 80–82 (CPR), and 83–85 (CPR). The segment at 65–85 (CPQCPRCPSCPSCPRCPRCPR) is 7 X 3 AA tandem repeats of C-P-X.

Belongs to the alpha-defensin family. In terms of tissue distribution, small bowel, spleen, colon, kidney, liver, stomach and femur marrow.

The protein resides in the secreted. In terms of biological role, apparent precursor of a secreted, cationic, proline- and cysteine-rich peptide that contains Cys-Pro-Xaa repeats. Unlike cryptdin, the proposed mature peptide region lacks the structural motif characteristic of defensins. It may have microbicidal activities. In Mus musculus (Mouse), this protein is Alpha-defensin-related sequence 2 (Defa-rs2).